The primary structure comprises 275 residues: Elongation factor Ts (275 aa).

The tract at residues threonine 76 to valine 79 is involved in Mg(2+) ion dislocation from EF-Tu.

It belongs to the EF-Ts family.

Its subcellular location is the cytoplasm. In terms of biological role, associates with the EF-Tu.GDP complex and induces the exchange of GDP to GTP. It remains bound to the aminoacyl-tRNA.EF-Tu.GTP complex up to the GTP hydrolysis stage on the ribosome. This chain is Elongation factor Ts, found in Rhodococcus opacus (strain B4).